The primary structure comprises 177 residues: Secretion monitor (177 aa).

Residues 1–37 form the signal peptide; the sequence is MIGILNRWRQFGRRYFWPHLLLGMVAASLGVPLNLSG.

Belongs to the SecM family.

The protein resides in the cytoplasm. It localises to the cytosol. The protein localises to the periplasm. In terms of biological role, regulates secA expression by translational coupling of the secM secA operon. Translational pausing at a specific Pro residue 5 residues before the end of the protein may allow disruption of a mRNA repressor helix that normally suppresses secA translation initiation. The chain is Secretion monitor from Yersinia pestis bv. Antiqua (strain Antiqua).